We begin with the raw amino-acid sequence, 262 residues long: 4-hydroxy-tetrahydrodipicolinate reductase (262 aa).

Residue 9–14 (GCLGRM) coordinates NAD(+). Arg36 contacts NADP(+). Residues 100–102 (GTT) and 121–124 (SANM) each bind NAD(+). His154 functions as the Proton donor/acceptor in the catalytic mechanism. Position 155 (His155) interacts with (S)-2,3,4,5-tetrahydrodipicolinate. Catalysis depends on Lys158, which acts as the Proton donor. 164 to 165 (GT) is a binding site for (S)-2,3,4,5-tetrahydrodipicolinate.

It belongs to the DapB family.

It localises to the cytoplasm. The enzyme catalyses (S)-2,3,4,5-tetrahydrodipicolinate + NAD(+) + H2O = (2S,4S)-4-hydroxy-2,3,4,5-tetrahydrodipicolinate + NADH + H(+). The catalysed reaction is (S)-2,3,4,5-tetrahydrodipicolinate + NADP(+) + H2O = (2S,4S)-4-hydroxy-2,3,4,5-tetrahydrodipicolinate + NADPH + H(+). It participates in amino-acid biosynthesis; L-lysine biosynthesis via DAP pathway; (S)-tetrahydrodipicolinate from L-aspartate: step 4/4. Functionally, catalyzes the conversion of 4-hydroxy-tetrahydrodipicolinate (HTPA) to tetrahydrodipicolinate. The polypeptide is 4-hydroxy-tetrahydrodipicolinate reductase (Wolbachia pipientis subsp. Culex pipiens (strain wPip)).